We begin with the raw amino-acid sequence, 802 residues long: G-type lectin S-receptor-like serine/threonine-protein kinase At1g61550 (802 aa).

The first 19 residues, 1 to 19, serve as a signal peptide directing secretion; the sequence is MTRFACFLFSTLLLSFSYA. The 120-residue stretch at 20–139 folds into the Bulb-type lectin domain; sequence AITPTSPLSI…VSGITLWQSF (120 aa). The Extracellular segment spans residues 20 to 421; that stretch reads AITPTSPLSI…EMGGNQRKKT (402 aa). N-linked (GlcNAc...) asparagine glycosylation is found at N48, N89, N112, N231, and N262. The EGF-like domain maps to 273 to 309; it reads PANTCDFYGVCGPFGLCVMSIPPKCKCFKGFVPQFSE. 2 disulfides stabilise this stretch: C277–C289 and C283–C297. 3 N-linked (GlcNAc...) asparagine glycosylation sites follow: N315, N331, and N370. One can recognise a PAN domain in the interval 328–410; that stretch reads CQGNSTGRHV…GELLSIRLAS (83 aa). 2 disulfide bridges follow: C363–C384 and C367–C373. The chain crosses the membrane as a helical span at residues 422 to 442; sequence IIASIVSISLFVTLASAAFGF. At 443 to 802 the chain is on the cytoplasmic side; sequence WRYRLKHNAI…EVTQSVVLGR (360 aa). Residues 489–774 enclose the Protein kinase domain; sequence FSLVNKLGQG…DLPLPKEPTF (286 aa). ATP is bound by residues 495–503 and K517; that span reads LGQGGFGPV. A phosphoserine mark is found at S523 and S538. The segment at 578 to 595 is caM-binding; it reads RKRVEIDWPKRFSIIQGI. D614 functions as the Proton acceptor in the catalytic mechanism. 2 positions are modified to phosphoserine: S618 and S631. At T648 the chain carries Phosphothreonine. S691 bears the Phosphoserine mark.

The protein belongs to the protein kinase superfamily. Ser/Thr protein kinase family.

It localises to the cell membrane. It carries out the reaction L-seryl-[protein] + ATP = O-phospho-L-seryl-[protein] + ADP + H(+). The enzyme catalyses L-threonyl-[protein] + ATP = O-phospho-L-threonyl-[protein] + ADP + H(+). The protein is G-type lectin S-receptor-like serine/threonine-protein kinase At1g61550 of Arabidopsis thaliana (Mouse-ear cress).